Reading from the N-terminus, the 140-residue chain is Hexon-interlacing protein (140 aa).

Residues 100–127 adopt a coiled-coil conformation; the sequence is LTALLAQLDSLTRELNVVSQQLLDLRQQ.

Belongs to the adenoviridae hexon-interlacing protein family. As to quaternary structure, homotrimer. Interacts with hexon protein; this interaction tethers the hexons together. Self-interacts with adjacent proteins. Interacts with kinesin light chain KLC1; this interaction leads to capsid disruption at the nuclear pore complex during virus entry into host cell.

Its subcellular location is the virion. The protein localises to the host nucleus. Structural component of the virion that acts as a cement protein on the capsid exterior and forms triskelion structures consisting of three molecules that stabilize three hexon trimers at the center of each icosahedral facet and fixes the peripentonal hexons. Dispensable for assembly. During virus entry, recruits the anterograde motor kinesin-1 to the capsid docked at the nuclear pore complex thereby subjecting the docked capsid to a pulling force. The resulting tension leads to capsid disruption, dispersion of capsid fragments toward cell periphery and eventually viral DNA entry into the host nucleus. In Human adenovirus C serotype 5 (HAdV-5), this protein is Hexon-interlacing protein.